The following is a 195-amino-acid chain: Protein RD3 (195 aa).

A coiled-coil region spans residues 22-54; sequence AEMVLETLMMELAGQMREVERQQRERRSAVRKI. Residues 168–177 are compositionally biased toward basic and acidic residues; it reads TISEDVERDA. The interval 168-195 is disordered; sequence TISEDVERDAPPPPRTWSMPEFRAPQAD.

As to quaternary structure, monomer. Interacts with GUCY2E; promotes the exit of GUCY2E from the endoplasmic reticulum and its trafficking to the photoreceptor outer segments. The interaction with GUCY2E negatively regulates its activity. Interacts with GUCY2F; promotes the exit of GUCY2F from the endoplasmic reticulum and its trafficking to the photoreceptor outer segments. The interaction with GUCY2F negatively regulates its activity. Interacts with GUK1; up-regulates GUK1 activity. In terms of tissue distribution, expressed in the retina and in particular in the inner nuclear layer, in rod and cone outer segments, in the outer nuclear layer, in the outer plexiform layer and in the ganglion cell layer.

The protein resides in the cell projection. It localises to the cilium. It is found in the photoreceptor outer segment. The protein localises to the photoreceptor inner segment. Its subcellular location is the endosome. The protein resides in the nucleus. It localises to the cytoplasm. It is found in the perinuclear region. In terms of biological role, plays a critical role in the regulation of enzymes involved in nucleotide cycle in photoreceptors. Inhibits the basal catalytic activity and the GCAP-stimulated activity of GUCY2E and GUCY2F, two retinal guanylyl cyclases involved in the production of cGMP in photoreceptors. Involved in the transport of GUCY2E and GUCY2F to their target sites in the photoreceptor outer segment. Up-regulates the activity of GUK1, a kinase that also plays an essential role for recycling GMP and indirectly, cGMP. Plays an important role for the survival of rods and cones in the retina. In Mus musculus (Mouse), this protein is Protein RD3 (Rd3).